We begin with the raw amino-acid sequence, 153 residues long: Endoribonuclease YbeY (153 aa).

Zn(2+) is bound by residues histidine 114, histidine 118, and histidine 124.

Belongs to the endoribonuclease YbeY family. Zn(2+) serves as cofactor.

It localises to the cytoplasm. Functionally, single strand-specific metallo-endoribonuclease involved in late-stage 70S ribosome quality control and in maturation of the 3' terminus of the 16S rRNA. In Shewanella amazonensis (strain ATCC BAA-1098 / SB2B), this protein is Endoribonuclease YbeY.